We begin with the raw amino-acid sequence, 462 residues long: Protoheme IX farnesyltransferase, mitochondrial (462 aa).

The N-terminal 30 residues, 1-30, are a transit peptide targeting the mitochondrion; that stretch reads MSYFPRTYAHLMRNVLAHNKGNIYLQIGTQ. The next 7 helical transmembrane spans lie at 158–178, 234–254, 274–294, 298–318, 352–372, 373–393, and 425–445; these read TILV…PASV, LIGT…VAIL, IINT…GWAA, LSHP…FPHF, YSIL…TDWY, YQID…KFYW, and FMAS…HKKG.

This sequence belongs to the UbiA prenyltransferase family. Forms ~370 kDa homooligomeric complexes.

It localises to the mitochondrion. Its subcellular location is the mitochondrion membrane. It carries out the reaction heme b + (2E,6E)-farnesyl diphosphate + H2O = Fe(II)-heme o + diphosphate. The protein operates within porphyrin-containing compound metabolism; heme O biosynthesis; heme O from protoheme: step 1/1. Its activity is regulated as follows. Positively regulated by the hydroxylated intermediate (heme I) formed at the subsequent step, or by HAS/COX15 itself. Catalyzes the first reaction in the biosynthesis of heme A, a prosthetic group of mitochondrial cytochrome c oxidase (CcO). Heme A is synthesized from heme B by two sequential enzymatic reactions catalyzed by heme O synthase (HOS/COX10) and heme A synthase (HAS/COX15). HOS converts heme B (protoheme IX) to heme O by substitution of the vinyl group on carbon 2 of heme B porphyrin ring with a hydroxyethyl farnesyl side group. The sequence is that of Protoheme IX farnesyltransferase, mitochondrial (COX10) from Saccharomyces cerevisiae (strain ATCC 204508 / S288c) (Baker's yeast).